A 311-amino-acid chain; its full sequence is Ribosomal RNA small subunit methyltransferase H (311 aa).

S-adenosyl-L-methionine is bound by residues 32–34, aspartate 52, phenylalanine 79, aspartate 100, and glutamine 107; that span reads AGH. Residues 287 to 311 form a disordered region; sequence TASQEELEENNRARSAKLRIAEKRK. The span at 300–311 shows a compositional bias: basic residues; sequence RSAKLRIAEKRK.

It belongs to the methyltransferase superfamily. RsmH family.

Its subcellular location is the cytoplasm. It carries out the reaction cytidine(1402) in 16S rRNA + S-adenosyl-L-methionine = N(4)-methylcytidine(1402) in 16S rRNA + S-adenosyl-L-homocysteine + H(+). Specifically methylates the N4 position of cytidine in position 1402 (C1402) of 16S rRNA. The polypeptide is Ribosomal RNA small subunit methyltransferase H (Bacillus subtilis (strain 168)).